We begin with the raw amino-acid sequence, 635 residues long: Multiple inositol polyphosphate phosphatase 1 (635 aa).

The N-terminal stretch at 1-23 (MMVKIKNIIILFCIFGLLSNVSS) is a signal peptide. The Extracellular portion of the chain corresponds to 24 to 565 (LSSSSSSSQS…GNDSHSKKSS (542 aa)). The segment at 66–102 (KNGDSNSQGDGSSGNSNSNSNSNSNSNSNSDSSNEPP) is disordered. Over residues 67 to 99 (NGDSNSQGDGSSGNSNSNSNSNSNSNSNSDSSN) the composition is skewed to low complexity. His116 is a catalytic residue. Over residues 380-421 (SSSSSSSSSSNNGDNSGSNGSSGSGSSTSTSSNDNGSTNNND) the composition is skewed to low complexity. The interval 380 to 425 (SSSSSSSSSSNNGDNSGSNGSSGSGSSTSTSSNDNGSTNNNDNKVE) is disordered. A helical transmembrane segment spans residues 566 to 586 (YFLAIFIPITFLVGGTIGGIF). Over 587-635 (TYFSYEKIMQVKNRKKLTQYGNDEFISSPKSKSFSFKPTKFDSRSPLIQ) the chain is Cytoplasmic. A compositionally biased stretch (low complexity) spans 614 to 624 (SPKSKSFSFKP). The segment at 614–635 (SPKSKSFSFKPTKFDSRSPLIQ) is disordered.

It belongs to the histidine acid phosphatase family. MINPP1 subfamily.

The protein localises to the membrane. It catalyses the reaction 1D-myo-inositol hexakisphosphate + H2O = 1D-myo-inositol 1,2,4,5,6-pentakisphosphate + phosphate. It carries out the reaction 1D-myo-inositol 1,2,4,5,6-pentakisphosphate + H2O = 1D-myo-inositol 1,2,5,6-tetrakisphosphate + phosphate. The catalysed reaction is 1D-myo-inositol 1,2,5,6-tetrakisphosphate + H2O = 1D-myo-inositol 1,2,6-trisphosphate + phosphate. The enzyme catalyses 1D-myo-inositol 1,2,6-trisphosphate + H2O = 1D-myo-inositol 1,2-bisphosphate + phosphate. It catalyses the reaction 1D-myo-inositol 1,2-bisphosphate + H2O = 1D-myo-inositol 2-phosphate + phosphate. It carries out the reaction (2R)-2,3-bisphosphoglycerate + H2O = (2R)-2-phosphoglycerate + phosphate. Probable multiple inositol polyphosphate phosphatase that hydrolyzes 1D-myo-inositol 1,3,4,5,6-pentakisphosphate (InsP5[2OH]) and 1D-myo-inositol hexakisphosphate (InsP6) to a range of less phosphorylated inositol phosphates. This regulates the availability of these various small molecule second messengers and metal chelators which control many aspects of cell physiology. May have a dual substrate specificity, and function as a 2,3-bisphosphoglycerate 3-phosphatase hydrolyzing 2,3-bisphosphoglycerate to 2-phosphoglycerate. 2,3-bisphosphoglycerate (BPG) is formed as part of the Rapoport-Luebering glycolytic bypass. This chain is Multiple inositol polyphosphate phosphatase 1 (mipp1), found in Dictyostelium discoideum (Social amoeba).